Consider the following 95-residue polypeptide: Co-chaperonin GroES (95 aa).

Belongs to the GroES chaperonin family. As to quaternary structure, heptamer of 7 subunits arranged in a ring. Interacts with the chaperonin GroEL.

It is found in the cytoplasm. In terms of biological role, together with the chaperonin GroEL, plays an essential role in assisting protein folding. The GroEL-GroES system forms a nano-cage that allows encapsulation of the non-native substrate proteins and provides a physical environment optimized to promote and accelerate protein folding. GroES binds to the apical surface of the GroEL ring, thereby capping the opening of the GroEL channel. This chain is Co-chaperonin GroES, found in Rickettsia felis (strain ATCC VR-1525 / URRWXCal2) (Rickettsia azadi).